The primary structure comprises 144 residues: 3-hydroxyacyl-[acyl-carrier-protein] dehydratase FabZ (144 aa).

Residue His47 is part of the active site.

The protein belongs to the thioester dehydratase family. FabZ subfamily.

Its subcellular location is the cytoplasm. The catalysed reaction is a (3R)-hydroxyacyl-[ACP] = a (2E)-enoyl-[ACP] + H2O. In terms of biological role, involved in unsaturated fatty acids biosynthesis. Catalyzes the dehydration of short chain beta-hydroxyacyl-ACPs and long chain saturated and unsaturated beta-hydroxyacyl-ACPs. This chain is 3-hydroxyacyl-[acyl-carrier-protein] dehydratase FabZ, found in Dechloromonas aromatica (strain RCB).